The following is a 246-amino-acid chain: CD99 antigen-like protein 2 (246 aa).

Positions 1 to 25 (MVARLTTLLVCLVFSLATLVQRGYG) are cleaved as a signal peptide. The Extracellular portion of the chain corresponds to 26–160 (DFDDFNLEDA…PGSGAVTDPG (135 aa)). The segment at 43-156 (KQSHFSTTTR…SQDDPGSGAV (114 aa)) is disordered. 2 stretches are compositionally biased toward low complexity: residues 49-58 (TTTRRTGTTR) and 71-81 (TTTTTKRPGTT). The span at 100-109 (DDRNDLDGPK) shows a compositional bias: basic and acidic residues. S153 carries O-linked (Xyl...) (chondroitin sulfate) serine glycosylation. A helical transmembrane segment spans residues 161-181 (TIAGLVSALAAALLGAVSGYL). Residues 182 to 246 (SYQHRKFCFS…EPLAPERPRI (65 aa)) lie on the Cytoplasmic side of the membrane. The disordered stretch occupies residues 223–246 (APPVTDSTQHSQPTEPLAPERPRI). Positions 227-236 (TDSTQHSQPT) are enriched in polar residues.

This sequence belongs to the CD99 family. In terms of processing, O-glycosylated. As to expression, expressed predominantly in the ventral medullary surface of the brain, moderate expression in the cerebral cortex and cerebellum. Low expression in lung and kidney. No expression in heart, stomach, intestine and skeletal muscle.

It is found in the cell membrane. The protein resides in the cell junction. The protein localises to the secreted. Functionally, plays a role in a late step of leukocyte extravasation helping cells to overcome the endothelial basement membrane. Acts at the same site as, but independently of, PECAM1. Homophilic adhesion molecule, but these interactions may not be required for cell aggregation. This chain is CD99 antigen-like protein 2 (Cd99l2), found in Rattus norvegicus (Rat).